The primary structure comprises 519 residues: 2-isopropylmalate synthase (519 aa).

The Pyruvate carboxyltransferase domain occupies 5–267 (VIIFDTTLRD…TTNVNPMEIS (263 aa)). Residues Asp14, His202, His204, and Asn238 each coordinate Mn(2+). Residues 392-519 (RLESINVQSG…KEQLIHIDQV (128 aa)) form a regulatory domain region.

Belongs to the alpha-IPM synthase/homocitrate synthase family. LeuA type 1 subfamily. As to quaternary structure, homodimer. It depends on Mn(2+) as a cofactor.

The protein resides in the cytoplasm. It catalyses the reaction 3-methyl-2-oxobutanoate + acetyl-CoA + H2O = (2S)-2-isopropylmalate + CoA + H(+). It functions in the pathway amino-acid biosynthesis; L-leucine biosynthesis; L-leucine from 3-methyl-2-oxobutanoate: step 1/4. Its function is as follows. Catalyzes the condensation of the acetyl group of acetyl-CoA with 3-methyl-2-oxobutanoate (2-ketoisovalerate) to form 3-carboxy-3-hydroxy-4-methylpentanoate (2-isopropylmalate). The polypeptide is 2-isopropylmalate synthase (Psychromonas ingrahamii (strain DSM 17664 / CCUG 51855 / 37)).